The sequence spans 503 residues: Lycopene beta cyclase, chloroplastic/chromoplastic (503 aa).

A chloroplast and chromoplast-targeting transit peptide spans 1-85; that stretch reads MDTLLRTHNR…DLPLYDPSKA (85 aa). 90–117 contributes to the NAD(+) binding site; that stretch reads LAVVGGGPLARSCSTSLGGGLSVVSIDP.

The protein belongs to the lycopene cyclase family.

The protein localises to the plastid. The protein resides in the chloroplast. Its subcellular location is the chromoplast. It localises to the chromoplast membrane. It is found in the chloroplast membrane. It carries out the reaction a carotenoid psi-end group = a carotenoid beta-end derivative. Its pathway is carotenoid biosynthesis; beta-carotene biosynthesis. It functions in the pathway carotenoid biosynthesis; beta-zeacarotene biosynthesis. Catalyzes the double cyclization reaction which converts lycopene to beta-carotene and neurosporene to beta-zeacarotene. The sequence is that of Lycopene beta cyclase, chloroplastic/chromoplastic (LCY1) from Narcissus pseudonarcissus (Daffodil).